Here is a 313-residue protein sequence, read N- to C-terminus: L-lactate dehydrogenase 1 (313 aa).

NAD(+) is bound by residues Val-15, Asp-36, Lys-41, Tyr-66, and 80–81; that span reads GA. Gln-83 and Arg-89 together coordinate substrate. Residues Ser-102, 119 to 121, and Ser-144 each bind NAD(+); that span reads VSN. 121–124 is a substrate binding site; that stretch reads NPVD. 149-152 serves as a coordination point for substrate; the sequence is DTSR. The beta-D-fructose 1,6-bisphosphate site is built by Arg-154 and His-169. His-176 (proton acceptor) is an active-site residue. Tyr-222 is subject to Phosphotyrosine. Thr-231 is a binding site for substrate.

The protein belongs to the LDH/MDH superfamily. LDH family. As to quaternary structure, homotetramer.

It is found in the cytoplasm. The enzyme catalyses (S)-lactate + NAD(+) = pyruvate + NADH + H(+). The protein operates within fermentation; pyruvate fermentation to lactate; (S)-lactate from pyruvate: step 1/1. Allosterically activated by fructose 1,6-bisphosphate (FBP). Its function is as follows. Catalyzes the conversion of lactate to pyruvate. The protein is L-lactate dehydrogenase 1 of Clostridium acetobutylicum (strain ATCC 824 / DSM 792 / JCM 1419 / IAM 19013 / LMG 5710 / NBRC 13948 / NRRL B-527 / VKM B-1787 / 2291 / W).